The chain runs to 497 residues: Probable D-lactate dehydrogenase, mitochondrial (497 aa).

Positions 65 to 246 (HRCRPPDVVV…TKATLRLYGV (182 aa)) constitute an FAD-binding PCMH-type domain.

This sequence belongs to the FAD-binding oxidoreductase/transferase type 4 family. FAD is required as a cofactor.

Its subcellular location is the mitochondrion. It catalyses the reaction (R)-lactate + 2 Fe(III)-[cytochrome c] = 2 Fe(II)-[cytochrome c] + pyruvate + 2 H(+). Its function is as follows. Involved in D-lactate, but not L-lactate catabolic process. The chain is Probable D-lactate dehydrogenase, mitochondrial (ldhd) from Danio rerio (Zebrafish).